A 2033-amino-acid chain; its full sequence is MFKGLSKGSQGKGSPKGSPAKGSPKGSPSRHSRAATQELALLISRMQANADQVERDILETQKRLQQDRLNSEQSQALQHQQETGRSLKEAEVLLKDLFLDVDKARRLKHPQAEEIEKDIKQLHERVTQECAEYRALYEKMVLPPDVGPRVDWARVLEQKQKQVCAGQYGPGMAELEQQIAEHNILQKEIDAYGQQLRSLVGPDAATIRSQYRDLLKAASWRGQSLGSLYTHLQGCTRQLSALAEQQRRILQQDWSDLMADPAGVRREYEHFKQHELLSQEQSVNQLEDDGERMVELRHPAVGPIQAHQEALKMEWQNFLNLCICQETQLQHVEDYRRFQEEADSVSQTLAKLNSNLDAKYSPAPGGPPGAPTELLQQLEAEEKRLAVTERATGDLQRRSRDVAPLPQRRNPPQQPLHVDSICDWDSGEVQLLQGERYKLVDNTDPHAWVVQGPGGETKRAPAACFCIPAPDPDAVARASRLASELQALKQKLATVQSRLKASAVESLRPSQQAPSGSDLANPQAQKLLTQMTRLDGDLGQIERQVLAWARAPLSRPTPLEDLEGRIHSHEGTAQRLQSLGTEKETAQKECEAFLSTRPVGPAALQLPVALNSVKNKFSDVQVLCSLYGEKAKAALDLERQIQDADRVIRGFEATLVQEAPIPAEPGALQERVSELQRQRRELLEQQTCVLRLHRALKASEHACAALQNNFQEFCQDLPRQQRQVRALTDRYHAVGDQLDLREKVVQDAALTYQQFKNCKDNLSSWLEHLPRSQVRPSDGPSQIAYKLQAQKRLTQEIQSRERDRATASHLSQALQAALQDYELQADTYRCSLEPTLAVSAPKRPRVAPLQESIQAQEKNLAKAYTEVAAAQQQLLQQLEFARKMLEKKELSEDIRRTHDAKQGSESPAQAGRESEALKAQLEEERKRVARVQHELEAQRSQLLQLRTQRPLERLEEKEVVEFYRDPQLEGSLSRVKAQVEEEGKRRAGLQADLEVAAQKVVQLESKRKTMQPHLLTKEVTQVERDPGLDSQAAQLRIQIQQLRGEDAVISARLEGLKKELLALEKREVDVKEKVVVKEVVKVEKNLEMVKAAQALRLQMEEDAARRKQAEEAVAKLQARIEDLERAISSVEPKVIVKEVKKVEQDPGLLQESSRLRSLLEEERTKNATLARELSDLHSKYSVVEKQRPKVQLQERVHEIFQVDPETEQEITRLKAKLQEMAGKRSGVEKEVEKLLPDLEVLRAQKPTVEYKEVTQEVVRHERSPEVLREIDRLKAQLNELVNSHGRSQEQLIRLQGERDEWRRERAKVETKTVSKEVVRHEKDPVLEKEAERLRQEVREAAQKRRAAEDAVYELQSKRLLLERRKPEEKVVVQEVVVTQKDPKLREEHSRLSGSLDEEVGRRRQLELEVQQLRAGVEEQEGLLSFQEDRSKKLAVERELRQLTLRIQELEKRPPTVQEKIIMEEVVKLEKDPDLEKSTEALRWDLDQEKTQVTELNRECKNLQVQIDVLQKAKSQEKTIYKEVIRVQKDRVLEDERARVWEMLNRERTARQAREEEARRLRERIDRAETLGRTWSREESELQRARDQADQECGRLQQELRALERQKQQQTLQLQEESKLLSQKTESERQKAAQRGQELSRLEAAILREKDQIYEKERTLRDLHAKVSREELSQETQTRETNLSTKISILEPETGKDMSPYEAYKRGIIDRGQYLQLQELECDWEEVTTSGPCGEESVLLDRKSGKQYSIEAALRCRRISKEEYHLYKDGHLPISEFALLVAGETKPSSSLSIGSIISKSPLASPAPQSTSFFSPSFSLGLGDDSFPIAGIYDTTTDNKCSIKTAVAKNMLDPITGQKLLEAQAATGGIVDLLSRERYSVHKAMERGLIENTSTQRLLNAQKAFTGIEDPVTKKRLSVGEAVQKGWMPRESVLPHLQVQHLTGGLIDPKRTGRIPIQQALLSGMISEELAQLLQDESSYEKDLTDPISKERLSYKEAMGRCRKDPLSGLLLLPAALEGYRCYRSASPTVPRSLR.

The span at 1–27 (MFKGLSKGSQGKGSPKGSPAKGSPKGS) shows a compositional bias: low complexity. Disordered stretches follow at residues 1-37 (MFKGLSKGSQGKGSPKGSPAKGSPKGSPSRHSRAATQ) and 65-85 (QQDRLNSEQSQALQHQQETGR). Residues 1–841 (MFKGLSKGSQ…LEPTLAVSAP (841 aa)) are globular 1. The tract at residues 12 to 28 (KGSPKGSPAKGSPKGSP) is 4 X 4 AA tandem repeats of K-G-S-P. A compositionally biased stretch (polar residues) spans 71 to 84 (SEQSQALQHQQETG). The stretch at 229–330 (YTHLQGCTRQ…LCICQETQLQ (102 aa)) is one Spectrin repeat. Basic and acidic residues predominate over residues 388 to 401 (TERATGDLQRRSRD). Disordered regions lie at residues 388–418 (TERATGDLQRRSRDVAPLPQRRNPPQQPLHV) and 891–916 (SEDIRRTHDAKQGSESPAQAGRESEA). The region spanning 413–470 (QQPLHVDSICDWDSGEVQLLQGERYKLVDNTDPHAWVVQGPGGETKRAPAACFCIPAP) is the SH3 domain. Residues 842–1673 (KRPRVAPLQE…AKVSREELSQ (832 aa)) form a central fibrous rod domain region. Positions 845-1135 (RVAPLQESIQ…AISSVEPKVI (291 aa)) form a coiled coil. Residues 891-902 (SEDIRRTHDAKQ) are compositionally biased toward basic and acidic residues. The stretch at 1185-1226 (KQRPKVQLQERVHEIFQVDPETEQEITRLKAKLQEMAGKRSG) is one Plectin 1 repeat. Serine 1575 carries the post-translational modification Phosphoserine. The segment covering 1614–1623 (QEESKLLSQK) has biased composition (low complexity). A disordered region spans residues 1614–1636 (QEESKLLSQKTESERQKAAQRGQ). Residues 1674–2033 (ETQTRETNLS…ASPTVPRSLR (360 aa)) form a globular 2 region. The stretch at 1678 to 1713 (RETNLSTKISILEPETGKDMSPYEAYKRGIIDRGQY) is one Plectin 2 repeat. Serine 1799 carries the post-translational modification Phosphoserine. Plectin repeat units lie at residues 1818–1855 (LGLGDDSFPIAGIYDTTTDNKCSIKTAVAKNMLDPITG), 1856–1893 (QKLLEAQAATGGIVDLLSRERYSVHKAMERGLIENTST), 1894–1931 (QRLLNAQKAFTGIEDPVTKKRLSVGEAVQKGWMPRESV), 1932–1969 (LPHLQVQHLTGGLIDPKRTGRIPIQQALLSGMISEELA), and 1970–2007 (QLLQDESSYEKDLTDPISKERLSYKEAMGRCRKDPLSG). Phosphoserine is present on serine 2025.

The protein belongs to the plakin or cytolinker family. As to quaternary structure, may form a homodimer or a heterodimer with PPL. As to expression, exclusively expressed in stratified squamous epithelia.

It is found in the cell junction. It localises to the desmosome. The protein resides in the cornified envelope. The protein localises to the cytoplasm. Its subcellular location is the cytoskeleton. Functionally, component of the cornified envelope of keratinocytes. May link the cornified envelope to desmosomes and intermediate filaments. This chain is Envoplakin (EVPL), found in Homo sapiens (Human).